The sequence spans 148 residues: Transcriptional repressor NrdR (148 aa).

Residues 3 to 32 (CPKCSSEESKVVDSRQAEDAIRRRRVCESC) fold into a zinc finger. Residues 47–137 (LLVIKKDDKR…VYRSFKDVSE (91 aa)) form the ATP-cone domain.

This sequence belongs to the NrdR family. Zn(2+) is required as a cofactor.

Its function is as follows. Negatively regulates transcription of bacterial ribonucleotide reductase nrd genes and operons by binding to NrdR-boxes. In Lactococcus lactis subsp. lactis (strain IL1403) (Streptococcus lactis), this protein is Transcriptional repressor NrdR.